The sequence spans 409 residues: Testis-expressed protein 13A (409 aa).

Residues 92–408 form a required for repression of transcription region; the sequence is WLHGFAKLHK…CGKGIWLQKP (317 aa). Residues 347–374 are disordered; the sequence is GGPHRIDHQEHPRDRRYSEPHQQRPPVY. A compositionally biased stretch (basic and acidic residues) spans 348–368; that stretch reads GPHRIDHQEHPRDRRYSEPHQ. The RanBP2-type zinc finger occupies 376–400; that stretch reads RPGDWDCPWCNAVNFSRRDTCFDCG. Residues Cys-382, Cys-385, Cys-396, and Cys-399 each coordinate Zn(2+).

The protein belongs to the TEX13 family. Interacts with CNOT1; the interaction may inhibit CNOT1 binding to mRNA and subsequently CNOT1-mediated mRNA degradation. As to expression, testis specific.

Binds to ssRNA containing the consensus sequence 5'-AGGUAA-3'. Plays a role in transcriptional repression. Required for rapid sperm motility and timely degradation of mRNA via its interaction with CNOT1. This chain is Testis-expressed protein 13A, found in Homo sapiens (Human).